The sequence spans 217 residues: Ribosomal RNA small subunit methyltransferase G (217 aa).

S-adenosyl-L-methionine is bound by residues G78, F83, 129-130 (AE), and R146.

The protein belongs to the methyltransferase superfamily. RNA methyltransferase RsmG family.

It localises to the cytoplasm. It carries out the reaction guanosine(527) in 16S rRNA + S-adenosyl-L-methionine = N(7)-methylguanosine(527) in 16S rRNA + S-adenosyl-L-homocysteine. Its function is as follows. Specifically methylates the N7 position of guanine in position 527 of 16S rRNA. In Geobacter sp. (strain M21), this protein is Ribosomal RNA small subunit methyltransferase G.